A 453-amino-acid polypeptide reads, in one-letter code: Oocyte zinc finger protein XlCOF6 (453 aa).

14 consecutive C2H2-type zinc fingers follow at residues 6-29, 67-89, 95-117, 123-145, 151-173, 179-201, 207-229, 235-257, 263-285, 291-313, 319-341, 375-397, 403-425, and 431-453; these read FICSKCGETFTVNSHLLTHLCGKH, FTCTECGKSFSERDNLKCHHKTH, FTCMECGKGFSVKSSLKHHYKAH, VRCTECGKEFTSKYYLNVHKRLH, FTCTQCGKCFSDKSALKYHHKTH, FACTECGKSFTEKSILQKHQRTH, FTCTECGKSYSAMSTLECHRRTH, FTCTECGKSFTEKSILRKHHKTH, FTCTECGKSCTEKSILRKHQITH, FTCTECGKCFSDKTALKYHHKTH, FACTECGKSFTDKSILRNHQRTH, FTCTECGKSFTHKSILQKHQRTH, and FTCTECGKCFSDKTAIKYHRITH.

This sequence belongs to the krueppel C2H2-type zinc-finger protein family.

It is found in the nucleus. In terms of biological role, may be involved in transcriptional regulation. The polypeptide is Oocyte zinc finger protein XlCOF6 (Xenopus laevis (African clawed frog)).